Here is a 285-residue protein sequence, read N- to C-terminus: ATP synthase gamma chain (285 aa).

It belongs to the ATPase gamma chain family. F-type ATPases have 2 components, CF(1) - the catalytic core - and CF(0) - the membrane proton channel. CF(1) has five subunits: alpha(3), beta(3), gamma(1), delta(1), epsilon(1). CF(0) has three main subunits: a, b and c.

The protein resides in the cell membrane. Its function is as follows. Produces ATP from ADP in the presence of a proton gradient across the membrane. The gamma chain is believed to be important in regulating ATPase activity and the flow of protons through the CF(0) complex. The sequence is that of ATP synthase gamma chain from Geobacillus kaustophilus (strain HTA426).